The following is a 236-amino-acid chain: Large ribosomal subunit protein uL3 (236 aa).

Belongs to the universal ribosomal protein uL3 family. Part of the 50S ribosomal subunit. Forms a cluster with proteins L14 and L19.

Its function is as follows. One of the primary rRNA binding proteins, it binds directly near the 3'-end of the 23S rRNA, where it nucleates assembly of the 50S subunit. The polypeptide is Large ribosomal subunit protein uL3 (Anaeromyxobacter dehalogenans (strain 2CP-C)).